A 209-amino-acid chain; its full sequence is UPF0502 protein mll4256 (209 aa).

This sequence belongs to the UPF0502 family.

The sequence is that of UPF0502 protein mll4256 from Mesorhizobium japonicum (strain LMG 29417 / CECT 9101 / MAFF 303099) (Mesorhizobium loti (strain MAFF 303099)).